The sequence spans 214 residues: Holliday junction branch migration complex subunit RuvA (214 aa).

The tract at residues 1–63 is domain I; sequence MISFLRGPVA…EDSMTLYGFA (63 aa). The interval 64–139 is domain II; sequence DPDEREVFEI…KLVPHGTVNG (76 aa). The flexible linker stretch occupies residues 139 to 143; sequence GAPAS. The interval 144–214 is domain III; that stretch reads PSAQWKPQVV…SAGRQVTARG (71 aa).

The protein belongs to the RuvA family. As to quaternary structure, homotetramer. Forms an RuvA(8)-RuvB(12)-Holliday junction (HJ) complex. HJ DNA is sandwiched between 2 RuvA tetramers; dsDNA enters through RuvA and exits via RuvB. An RuvB hexamer assembles on each DNA strand where it exits the tetramer. Each RuvB hexamer is contacted by two RuvA subunits (via domain III) on 2 adjacent RuvB subunits; this complex drives branch migration. In the full resolvosome a probable DNA-RuvA(4)-RuvB(12)-RuvC(2) complex forms which resolves the HJ.

Its subcellular location is the cytoplasm. In terms of biological role, the RuvA-RuvB-RuvC complex processes Holliday junction (HJ) DNA during genetic recombination and DNA repair, while the RuvA-RuvB complex plays an important role in the rescue of blocked DNA replication forks via replication fork reversal (RFR). RuvA specifically binds to HJ cruciform DNA, conferring on it an open structure. The RuvB hexamer acts as an ATP-dependent pump, pulling dsDNA into and through the RuvAB complex. HJ branch migration allows RuvC to scan DNA until it finds its consensus sequence, where it cleaves and resolves the cruciform DNA. This chain is Holliday junction branch migration complex subunit RuvA, found in Renibacterium salmoninarum (strain ATCC 33209 / DSM 20767 / JCM 11484 / NBRC 15589 / NCIMB 2235).